Here is a 190-residue protein sequence, read N- to C-terminus: Cell division protein SepF (190 aa).

It belongs to the SepF family. As to quaternary structure, homodimer. Interacts with FtsZ.

It localises to the cytoplasm. In terms of biological role, cell division protein that is part of the divisome complex and is recruited early to the Z-ring. Probably stimulates Z-ring formation, perhaps through the cross-linking of FtsZ protofilaments. Its function overlaps with FtsA. The protein is Cell division protein SepF of Synechococcus sp. (strain WH7803).